We begin with the raw amino-acid sequence, 216 residues long: MRLRNKPWAKDKIAAYPQYVIPDPEARRGRWHELFGNDRPIHIEIGTGKGKFITEMAKLHPDVNFIGIELYPSVLVSALDKLIESELPNVRLLNANAKDLTSFFADGEIARIYLNFSDPWPKKRHEKRRLTYRDFLALYDRILSADGDIHLKTDNQSFFEYSLVSLSQYGFVLAAVQLDLHRSDIVGNVMTEYEEKFSAKGNRIYRCEALRPPQQS.

Positions 44, 69, 96, and 118 each coordinate S-adenosyl-L-methionine. Residue D118 is part of the active site. K122 provides a ligand contact to substrate. The interaction with RNA stretch occupies residues R124–R129. Residues D154 and T191–E194 each bind substrate.

It belongs to the class I-like SAM-binding methyltransferase superfamily. TrmB family.

It catalyses the reaction guanosine(46) in tRNA + S-adenosyl-L-methionine = N(7)-methylguanosine(46) in tRNA + S-adenosyl-L-homocysteine. It functions in the pathway tRNA modification; N(7)-methylguanine-tRNA biosynthesis. Functionally, catalyzes the formation of N(7)-methylguanine at position 46 (m7G46) in tRNA. The protein is tRNA (guanine-N(7)-)-methyltransferase of Geobacillus thermodenitrificans (strain NG80-2).